A 144-amino-acid polypeptide reads, in one-letter code: Large ribosomal subunit protein uL16 (144 aa).

This sequence belongs to the universal ribosomal protein uL16 family. As to quaternary structure, part of the 50S ribosomal subunit.

In terms of biological role, binds 23S rRNA and is also seen to make contacts with the A and possibly P site tRNAs. This is Large ribosomal subunit protein uL16 from Bacillus cereus (strain ATCC 10987 / NRS 248).